Reading from the N-terminus, the 118-residue chain is MPRTKGGTVTRARRKKIMKLAKGYRGSKHLQFKAASTQVFVSRKYAFRDRKKRKSEFRKLWIARINAAARQNGLSYSKLMHGLKVAGIDMNRKMLADIAYNDEKTFADLADAAKKALN.

This sequence belongs to the bacterial ribosomal protein bL20 family.

In terms of biological role, binds directly to 23S ribosomal RNA and is necessary for the in vitro assembly process of the 50S ribosomal subunit. It is not involved in the protein synthesizing functions of that subunit. The polypeptide is Large ribosomal subunit protein bL20 (Lactobacillus johnsonii (strain CNCM I-12250 / La1 / NCC 533)).